Here is a 124-residue protein sequence, read N- to C-terminus: Small ribosomal subunit protein uS12 (124 aa).

The tract at residues Met-1–Cys-27 is disordered. The segment covering Glu-17–Cys-27 has biased composition (polar residues). Asp-89 carries the 3-methylthioaspartic acid modification.

Belongs to the universal ribosomal protein uS12 family. In terms of assembly, part of the 30S ribosomal subunit. Contacts proteins S8 and S17. May interact with IF1 in the 30S initiation complex.

In terms of biological role, with S4 and S5 plays an important role in translational accuracy. Interacts with and stabilizes bases of the 16S rRNA that are involved in tRNA selection in the A site and with the mRNA backbone. Located at the interface of the 30S and 50S subunits, it traverses the body of the 30S subunit contacting proteins on the other side and probably holding the rRNA structure together. The combined cluster of proteins S8, S12 and S17 appears to hold together the shoulder and platform of the 30S subunit. The protein is Small ribosomal subunit protein uS12 of Borreliella afzelii (strain PKo) (Borrelia afzelii).